Reading from the N-terminus, the 503-residue chain is Poxin-Schlafen (503 aa).

Histidine 15 acts as the Proton donor in catalysis. The Shared with catalytic histidine of dimeric partner role is filled by tyrosine 136. The Proton acceptor; shared with catalytic histidine of dimeric partner role is filled by lysine 140.

The protein in the N-terminal section; belongs to the poxin family. It in the C-terminal section; belongs to the Schlafen protein family. Subgroup poxviridae B3 subfamily. As to quaternary structure, homodimer.

It catalyses the reaction 2',3'-cGAMP + H2O = Gp(2'-5')Ap(3') + H(+). In terms of biological role, nuclease that is responsible for viral evasion of host cGAS-STING innate immunity. Cleaves 2',3'-cGAMP which is produced by host cGAS following recognition of cytosolic DNA and blocks the subsequent 2',3'-cGAMP-mediated activation of TMEM173/STING, which normally spreads to adjacent cells and activates the interferon and NF-kappa-B immune responses. The chain is Poxin-Schlafen (OPG188) from Cynomys gunnisoni (Gunnison's prairie dog).